Reading from the N-terminus, the 1138-residue chain is Nuclear pore complex-interacting protein family member B13 (1138 aa).

The helical transmembrane segment at 73 to 93 threads the bilayer; it reads VVITLWIVYLWVSLLKTIFWS. Disordered stretches follow at residues 242–578 and 747–1138; these read RMGH…NIKT and ERLR…RRLS. Over residues 252–263 the composition is skewed to polar residues; sequence QQHSITDNSLSL. Residues 349–359 show a composition bias toward pro residues; that stretch reads PLPPSAPPSAP. Basic and acidic residues-rich tracts occupy residues 406–416, 448–458, 490–500, 532–542, 782–792, 824–834, 866–876, 908–918, 950–960, and 992–1002; these read DNIKTPAERLR.

It belongs to the NPIP family.

Its subcellular location is the membrane. This chain is Nuclear pore complex-interacting protein family member B13, found in Homo sapiens (Human).